The sequence spans 463 residues: Phosphoglucosamine mutase (463 aa).

Catalysis depends on Ser102, which acts as the Phosphoserine intermediate. Mg(2+) is bound by residues Ser102, Asp240, Asp242, and Asp244. Ser102 carries the post-translational modification Phosphoserine.

The protein belongs to the phosphohexose mutase family. Mg(2+) is required as a cofactor. Activated by phosphorylation.

It carries out the reaction alpha-D-glucosamine 1-phosphate = D-glucosamine 6-phosphate. Functionally, catalyzes the conversion of glucosamine-6-phosphate to glucosamine-1-phosphate. The protein is Phosphoglucosamine mutase of Mycobacterium leprae (strain Br4923).